We begin with the raw amino-acid sequence, 239 residues long: Uridylate kinase (239 aa).

10 to 13 contacts ATP; the sequence is KFSG. The segment at 18–23 is involved in allosteric activation by GTP; sequence GENGFG. Glycine 52 contacts UMP. Residues glycine 53 and arginine 57 each coordinate ATP. UMP-binding positions include aspartate 73 and 134 to 141; that span reads TGNPYFTT. Threonine 161, tyrosine 167, and aspartate 170 together coordinate ATP.

It belongs to the UMP kinase family. In terms of assembly, homohexamer.

It is found in the cytoplasm. The enzyme catalyses UMP + ATP = UDP + ADP. It participates in pyrimidine metabolism; CTP biosynthesis via de novo pathway; UDP from UMP (UMPK route): step 1/1. Its activity is regulated as follows. Allosterically activated by GTP. Inhibited by UTP. Catalyzes the reversible phosphorylation of UMP to UDP. This chain is Uridylate kinase, found in Campylobacter jejuni subsp. doylei (strain ATCC BAA-1458 / RM4099 / 269.97).